We begin with the raw amino-acid sequence, 313 residues long: Ribosomal RNA small subunit methyltransferase H (313 aa).

S-adenosyl-L-methionine is bound by residues 35–37 (GGH), D55, F79, D100, and Q107.

It belongs to the methyltransferase superfamily. RsmH family.

Its subcellular location is the cytoplasm. The catalysed reaction is cytidine(1402) in 16S rRNA + S-adenosyl-L-methionine = N(4)-methylcytidine(1402) in 16S rRNA + S-adenosyl-L-homocysteine + H(+). Functionally, specifically methylates the N4 position of cytidine in position 1402 (C1402) of 16S rRNA. The chain is Ribosomal RNA small subunit methyltransferase H from Burkholderia orbicola (strain AU 1054).